A 184-amino-acid chain; its full sequence is Peptidyl-tRNA hydrolase (184 aa).

Residue Y14 coordinates tRNA. Catalysis depends on H19, which acts as the Proton acceptor. Residues F64, N66, and N112 each contribute to the tRNA site.

The protein belongs to the PTH family. As to quaternary structure, monomer.

The protein resides in the cytoplasm. The enzyme catalyses an N-acyl-L-alpha-aminoacyl-tRNA + H2O = an N-acyl-L-amino acid + a tRNA + H(+). In terms of biological role, hydrolyzes ribosome-free peptidyl-tRNAs (with 1 or more amino acids incorporated), which drop off the ribosome during protein synthesis, or as a result of ribosome stalling. Functionally, catalyzes the release of premature peptidyl moieties from peptidyl-tRNA molecules trapped in stalled 50S ribosomal subunits, and thus maintains levels of free tRNAs and 50S ribosomes. The protein is Peptidyl-tRNA hydrolase of Listeria welshimeri serovar 6b (strain ATCC 35897 / DSM 20650 / CCUG 15529 / CIP 8149 / NCTC 11857 / SLCC 5334 / V8).